The following is a 398-amino-acid chain: Phosphoglycerate kinase (398 aa).

Residues 21 to 23, Arg-36, 59 to 62, Arg-119, and Arg-157 each bind substrate; these read DFN and HLGR. Residues Lys-208, Gly-296, Glu-327, and 354–357 contribute to the ATP site; that span reads GGDS.

The protein belongs to the phosphoglycerate kinase family. Monomer.

The protein resides in the cytoplasm. It carries out the reaction (2R)-3-phosphoglycerate + ATP = (2R)-3-phospho-glyceroyl phosphate + ADP. It functions in the pathway carbohydrate degradation; glycolysis; pyruvate from D-glyceraldehyde 3-phosphate: step 2/5. The chain is Phosphoglycerate kinase from Streptococcus equi subsp. equi (strain 4047).